The chain runs to 328 residues: L-lactate dehydrogenase (328 aa).

NAD(+)-binding positions include V18, E39, K46, Y71, and 85 to 86 (GA). Substrate-binding residues include Q88 and R94. NAD(+) contacts are provided by residues S107, 124-126 (AAN), and S149. 126–129 (NPVD) lines the substrate pocket. Position 154-157 (154-157 (DSAR)) interacts with substrate. Positions 159 and 174 each coordinate beta-D-fructose 1,6-bisphosphate. The Proton acceptor role is filled by H181. Y226 is modified (phosphotyrosine). Residue T235 participates in substrate binding.

The protein belongs to the LDH/MDH superfamily. LDH family. In terms of assembly, homotetramer.

It is found in the cytoplasm. The enzyme catalyses (S)-lactate + NAD(+) = pyruvate + NADH + H(+). It functions in the pathway fermentation; pyruvate fermentation to lactate; (S)-lactate from pyruvate: step 1/1. With respect to regulation, allosterically activated by fructose 1,6-bisphosphate (FBP). In terms of biological role, catalyzes the conversion of lactate to pyruvate. The polypeptide is L-lactate dehydrogenase (Streptococcus thermophilus (strain CNRZ 1066)).